Consider the following 202-residue polypeptide: Acireductone dioxygenase (202 aa).

Fe(2+) contacts are provided by His110, His112, Glu116, and His154. 4 residues coordinate Ni(2+): His110, His112, Glu116, and His154.

This sequence belongs to the acireductone dioxygenase (ARD) family. In terms of assembly, monomer. It depends on Fe(2+) as a cofactor. The cofactor is Ni(2+).

It carries out the reaction 1,2-dihydroxy-5-(methylsulfanyl)pent-1-en-3-one + O2 = 3-(methylsulfanyl)propanoate + CO + formate + 2 H(+). The enzyme catalyses 1,2-dihydroxy-5-(methylsulfanyl)pent-1-en-3-one + O2 = 4-methylsulfanyl-2-oxobutanoate + formate + 2 H(+). The protein operates within amino-acid biosynthesis; L-methionine biosynthesis via salvage pathway; L-methionine from S-methyl-5-thio-alpha-D-ribose 1-phosphate: step 5/6. In terms of biological role, catalyzes 2 different reactions between oxygen and the acireductone 1,2-dihydroxy-3-keto-5-methylthiopentene (DHK-MTPene) depending upon the metal bound in the active site. Fe-containing acireductone dioxygenase (Fe-ARD) produces formate and 2-keto-4-methylthiobutyrate (KMTB), the alpha-ketoacid precursor of methionine in the methionine recycle pathway. Ni-containing acireductone dioxygenase (Ni-ARD) produces methylthiopropionate, carbon monoxide and formate, and does not lie on the methionine recycle pathway. This chain is Acireductone dioxygenase, found in Synechococcus sp. (strain CC9311).